The primary structure comprises 140 residues: Large ribosomal subunit protein uL13 (140 aa).

It belongs to the universal ribosomal protein uL13 family. As to quaternary structure, part of the 50S ribosomal subunit.

In terms of biological role, this protein is one of the early assembly proteins of the 50S ribosomal subunit, although it is not seen to bind rRNA by itself. It is important during the early stages of 50S assembly. In Nautilia profundicola (strain ATCC BAA-1463 / DSM 18972 / AmH), this protein is Large ribosomal subunit protein uL13.